Reading from the N-terminus, the 204-residue chain is Guanylate kinase (204 aa).

One can recognise a Guanylate kinase-like domain in the interval 3–181 (GTLIIITAPS…ALDDLVAVVR (179 aa)). ATP is bound at residue 10–17 (APSGAGKT).

This sequence belongs to the guanylate kinase family.

It localises to the cytoplasm. The catalysed reaction is GMP + ATP = GDP + ADP. Functionally, essential for recycling GMP and indirectly, cGMP. The protein is Guanylate kinase of Aromatoleum aromaticum (strain DSM 19018 / LMG 30748 / EbN1) (Azoarcus sp. (strain EbN1)).